We begin with the raw amino-acid sequence, 342 residues long: Trans-enoyl reductase himH (342 aa).

Position 46–49 (46–49 (TDWK)) interacts with NADP(+). 133–140 (LSVSTAAS) serves as a coordination point for substrate. NADP(+)-binding positions include 168–171 (SSSV), 191–194 (SQAN), 255–256 (VM), and 329–330 (VS).

Belongs to the zinc-containing alcohol dehydrogenase family. Monomer.

It functions in the pathway secondary metabolite biosynthesis. Its function is as follows. Trans-enoyl reductase; part of the him gene cluster that mediates the biosynthesis of himeic acid A, a ubiquitin-activating enzyme (E1) inhibitor. First, himA, together with the trans-enoyl reductase himH, catalyzes the formation of apolyketide chain, which is then condensed with leucine by the NRPS activity of himA. Dieckmann cyclization and release from himA gives a tetramic acid intermediate as the product of himA PKS-NRPS. HimG then catalyzes alpha-oxidation of the tetramic acid ring, with a subsequent rearrangement to yield apyrone intermediate. Two terminal methyl groups of polyketide and amide side chains are oxidized to carboxylic acids by himC cytochrome P450 monooxygenase to form himeic acid A. Himeic acid A is further converted to himeic acid B and C during culture growth. No gene responsible for pyrone to pyridone conversion was found in the him gene cluster and himeic acid A is non-enzymatically converted to himeic acid C by the incorporation of an ammonium nitrogen atom in a pH5 buffer, and to himeic acid B at a conversion ratio of 50% during incubation in MeOH for 5 days. The protein is Trans-enoyl reductase himH of Aspergillus japonicus.